The chain runs to 356 residues: S-adenosylmethionine:tRNA ribosyltransferase-isomerase (356 aa).

Belongs to the QueA family. Monomer.

Its subcellular location is the cytoplasm. It catalyses the reaction 7-aminomethyl-7-carbaguanosine(34) in tRNA + S-adenosyl-L-methionine = epoxyqueuosine(34) in tRNA + adenine + L-methionine + 2 H(+). It participates in tRNA modification; tRNA-queuosine biosynthesis. Its function is as follows. Transfers and isomerizes the ribose moiety from AdoMet to the 7-aminomethyl group of 7-deazaguanine (preQ1-tRNA) to give epoxyqueuosine (oQ-tRNA). This is S-adenosylmethionine:tRNA ribosyltransferase-isomerase from Salmonella arizonae (strain ATCC BAA-731 / CDC346-86 / RSK2980).